The following is a 103-amino-acid chain: MYAVIKTGGKQYRVSAGDKLKIEKLEAEVGSEITFDQVLMVGDGADIKMGAPLLRGATVSATVLNQARGDKIKIFKMRRRKHYRKSQGHRQYFTEVQIGGITA.

The protein belongs to the bacterial ribosomal protein bL21 family. Part of the 50S ribosomal subunit. Contacts protein L20.

Functionally, this protein binds to 23S rRNA in the presence of protein L20. The protein is Large ribosomal subunit protein bL21 of Thiobacillus denitrificans (strain ATCC 25259 / T1).